We begin with the raw amino-acid sequence, 224 residues long: BOS complex subunit TMEM147 (224 aa).

Residues 1 to 21 (MTLFHFGNCFALAYFPYFITY) form a helical membrane-spanning segment. Over 22-34 (KCSGLSEYNAFWK) the chain is Cytoplasmic. The chain crosses the membrane as a helical span at residues 35-58 (CVQAGVTYLFVQLCKMLFLATFFP). Residues 59 to 66 (TWEGGIYD) lie on the Lumenal side of the membrane. Residues 67–88 (FIGEFMKASVDVADLIGLNLVM) traverse the membrane as a helical segment. Residues 89–98 (SRNAGKGEYK) lie on the Cytoplasmic side of the membrane. Residues 99-124 (IMVAALGWATAELIMSRCIPLWVGAR) form a helical membrane-spanning segment. Residues 125 to 129 (GIEFD) are Lumenal-facing. A helical transmembrane segment spans residues 130–155 (WKYIQMSIDSNISLVHYIVASAQVWM). The Cytoplasmic segment spans residues 156-164 (ITRYDLYHT). Residues 165 to 187 (FRPAVLLLMFLSVYKAFVMETFV) form a helical membrane-spanning segment. Topologically, residues 188 to 194 (HLCSLGS) are lumenal. Residues 195–216 (WTALLARAVVTGLLALSTLALY) traverse the membrane as a helical segment. Residues 217–224 (VAVVNVHS) are Cytoplasmic-facing.

This sequence belongs to the TMEM147 family. In terms of assembly, component of the back of Sec61 (BOS) complex, composed of NCLN/Nicalin, NOMO1 and TMEM147. The BOS complex is part of the multi-pass translocon (MPT) complex, composed of three subcomplexes, the GEL complex (composed of RAB5IF/OPTI and TMCO1), the BOS complex (composed of NCLN/Nicalin, NOMO1 and TMEM147) and the PAT complex (composed of WDR83OS/Asterix and CCDC47). The MPT complex associates with the SEC61 complex. Interacts with CHRM3, CHRM1 and AVPR2. Interacts with LBR; promoting LBR localization to the nucleus inner membrane. Interacts with DHCR7.

It localises to the endoplasmic reticulum membrane. It is found in the nucleus membrane. The protein localises to the cell membrane. Functionally, component of the multi-pass translocon (MPT) complex that mediates insertion of multi-pass membrane proteins into the lipid bilayer of membranes. The MPT complex takes over after the SEC61 complex: following membrane insertion of the first few transmembrane segments of proteins by the SEC61 complex, the MPT complex occludes the lateral gate of the SEC61 complex to promote insertion of subsequent transmembrane regions. Also acts as a negative regulator of CHRM3 function, most likely by interfering with its trafficking to the cell membrane. Negatively regulates CHRM3-mediated calcium mobilization and activation of RPS6KA1/p90RSK activity. Regulates LBR localization to the nucleus inner membrane. This Canis lupus familiaris (Dog) protein is BOS complex subunit TMEM147.